The chain runs to 306 residues: Oxygen-dependent coproporphyrinogen-III oxidase (306 aa).

Position 99 (Ser99) interacts with substrate. A divalent metal cation contacts are provided by His103 and His113. His113 serves as the catalytic Proton donor. Residue Asn115–Arg117 participates in substrate binding. Residues His152 and His182 each contribute to the a divalent metal cation site. The interval Tyr247–Arg282 is important for dimerization. A substrate-binding site is contributed by Gly265–Arg267.

Belongs to the aerobic coproporphyrinogen-III oxidase family. In terms of assembly, homodimer. It depends on a divalent metal cation as a cofactor.

It is found in the cytoplasm. The enzyme catalyses coproporphyrinogen III + O2 + 2 H(+) = protoporphyrinogen IX + 2 CO2 + 2 H2O. It participates in porphyrin-containing compound metabolism; protoporphyrin-IX biosynthesis; protoporphyrinogen-IX from coproporphyrinogen-III (O2 route): step 1/1. Its function is as follows. Involved in the heme biosynthesis. Catalyzes the aerobic oxidative decarboxylation of propionate groups of rings A and B of coproporphyrinogen-III to yield the vinyl groups in protoporphyrinogen-IX. The polypeptide is Oxygen-dependent coproporphyrinogen-III oxidase (Burkholderia ambifaria (strain MC40-6)).